We begin with the raw amino-acid sequence, 314 residues long: Ribosomal RNA small subunit methyltransferase H (314 aa).

S-adenosyl-L-methionine is bound by residues 37–39 (GGH), D57, F83, D105, and Q112.

It belongs to the methyltransferase superfamily. RsmH family.

The protein localises to the cytoplasm. The catalysed reaction is cytidine(1402) in 16S rRNA + S-adenosyl-L-methionine = N(4)-methylcytidine(1402) in 16S rRNA + S-adenosyl-L-homocysteine + H(+). Its function is as follows. Specifically methylates the N4 position of cytidine in position 1402 (C1402) of 16S rRNA. The sequence is that of Ribosomal RNA small subunit methyltransferase H from Thioalkalivibrio sulfidiphilus (strain HL-EbGR7).